The following is a 124-amino-acid chain: Small ribosomal subunit protein uS11 (124 aa).

The protein belongs to the universal ribosomal protein uS11 family. In terms of assembly, part of the 30S ribosomal subunit. Interacts with proteins S7 and S18. Binds to IF-3.

Its function is as follows. Located on the platform of the 30S subunit, it bridges several disparate RNA helices of the 16S rRNA. Forms part of the Shine-Dalgarno cleft in the 70S ribosome. This Anaplasma marginale (strain St. Maries) protein is Small ribosomal subunit protein uS11.